Reading from the N-terminus, the 438-residue chain is Probable 26S proteasome regulatory subunit rpn-6.1 (438 aa).

Over residues 1 to 10 the composition is skewed to basic and acidic residues; sequence MRETSSREDT. The tract at residues 1 to 30 is disordered; it reads MRETSSREDTNNIGKAPEMSGGTIMDTMTS. Positions 239–408 constitute a PCI domain; sequence DFKTAFSYFY…GMLIVFEIAV (170 aa).

Belongs to the proteasome subunit S9 family. As to quaternary structure, component of the lid subcomplex of the 19S proteasome regulatory particle complex (also named PA700 complex). The 26S proteasome consists of a 20S proteasome core and two 19S regulatory subunits.

Functionally, component of the lid subcomplex of the 26S proteasome, a multiprotein complex involved in the ATP-dependent degradation of ubiquitinated proteins. In the complex, rpn-6.1 is required for proteasome assembly. Plays a key role in increased proteasome activity in response to proteotoxic stress: induced by daf-16, promoting enhanced assembly of the 26S proteasome and higher proteasome activity, leading to extended lifespan. In Caenorhabditis elegans, this protein is Probable 26S proteasome regulatory subunit rpn-6.1.